Reading from the N-terminus, the 245-residue chain is Tyrosine recombinase XerD-like (245 aa).

Positions 1-72 (MITFISKFLA…AVNQFLFFLY (72 aa)) constitute a Core-binding (CB) domain. The Tyr recombinase domain maps to 90–245 (PLLTPAYQEV…PVTLEKYFKN (156 aa)). Active-site residues include lysine 151 and arginine 210. Tyrosine 242 acts as the O-(3'-phospho-DNA)-tyrosine intermediate in catalysis.

It belongs to the 'phage' integrase family. XerD-like subfamily.

The protein resides in the cytoplasm. Functionally, putative tyrosine recombinase. Not involved in the cutting and rejoining of the recombining DNA molecules on dif(SL) site. The polypeptide is Tyrosine recombinase XerD-like (Streptococcus mutans serotype c (strain ATCC 700610 / UA159)).